A 593-amino-acid polypeptide reads, in one-letter code: Immunoglobulin G-binding protein G (593 aa).

The N-terminal stretch at 1–33 (MEKEKKVKYFLRKSAFGLASVSAAFLVGSTVFA) is a signal peptide. 5 repeat units span residues 104-140 (LAKAKADALKEFNKYGVSDYYKNLINNAKTVEGVKDL), 179-215 (LAEAKVLANRELDKYGVSDYHKNLINNAKTVEGVKDL), 254-290 (LAEAKVLANRELDKYGVSDYYKNLINNAKTVEGVKAL), 303-357 (TYKL…TVTE), and 373-427 (TYKL…TVTE). A 3 X 37 AA repeats region spans residues 104 to 290 (LAKAKADALK…AKTVEGVKAL (187 aa)). The interval 303–427 (TYKLILNGKT…DATKTFTVTE (125 aa)) is 2 X 55 AA repeats. Residues 503 to 567 (PGDAPTEPEK…TLPTTGEGSN (65 aa)) form a disordered region. The span at 529 to 557 (AKDDAKKDDTKKEDAKKPEAKKEDAKKAE) shows a compositional bias: basic and acidic residues. The 5 X 5 AA repeats of [DE]-D-A-K-K stretch occupies residues 531-555 (DDAKKDDTKKEDAKKPEAKKEDAKK). Residues 559 to 563 (LPTTG) carry the LPXTG sorting signal motif. Residue Thr562 is modified to Pentaglycyl murein peptidoglycan amidated threonine. Residues 563 to 593 (GEGSNPFFTAAALAVMAGAGALAVASKRKED) constitute a propeptide, removed by sortase.

Its subcellular location is the secreted. It is found in the cell wall. This is Immunoglobulin G-binding protein G (spg) from Streptococcus sp. group G.